Here is a 732-residue protein sequence, read N- to C-terminus: uncharacterized protein (732 aa).

Belongs to the mimivirus L137 family.

This is an uncharacterized protein from Acanthamoeba polyphaga mimivirus (APMV).